Consider the following 473-residue polypeptide: MRHYYSVAAIRDAEASLLASLPDGVLMKRAAYGLASVIIRELAVRTGGVTGRRVCAVVGSGDNGGDALWAATFLRRRGAAADAVLLNPDRVHRKALVAFRKAGGRIVENVSAATDLVIDGVVGISGSGPLRPAAAAVFATVSASGVPVVAVDLPSGIDVVTGVINGPAVHAALTVTFGGLKPVHALADCGDVTLVDIGLDLPDSDILGLQAADVAAYWPVPGVHDDKYTQGVTGVLAGSSTYPGAAVLCTGAAVAATSGMVRYAGSAYTQVLAHWPEVIASATPTAAGRVQSWVVGPGLGIDATATAALWFALETDLPVLVDADGLTMLAAHPDLVINRNAPTVLTPHASEFARLAGTPPGDDRVGACRKLADSFGATVLLKGNVTVIADPGGPVYLNPAGQSWAATAGSGDVLSGMIGALLAAGLPAAEAAAAAAFVHARAAALSAADPGPGDVPTSASRMVSHIRTALAAL.

An NAD(P)H-hydrate epimerase region spans residues 1–203 (MRHYYSVAAI…LVDIGLDLPD (203 aa)). Residues 10-205 (IRDAEASLLA…DIGLDLPDSD (196 aa)) enclose the YjeF N-terminal domain. The tract at residues 62 to 66 (DNGGD) is NADPHX 1; for epimerase activity. 2 residues coordinate K(+): Asn63 and Asp119. Residues 123–129 (GISGSGP) are NADPHX 1; for epimerase activity. Asp152 serves as a coordination point for (6S)-NADPHX. Ser155 serves as a coordination point for K(+). The 264-residue stretch at 210 to 473 (QAADVAAYWP…SHIRTALAAL (264 aa)) folds into the YjeF C-terminal domain. Residues 210-473 (QAADVAAYWP…SHIRTALAAL (264 aa)) are ADP-dependent (S)-NAD(P)H-hydrate dehydratase. Gly298 is a binding site for (6S)-NADPHX. The interval 348–354 (HASEFAR) is NADPHX 2; for dehydratase activity. ADP contacts are provided by residues 382-386 (KGNVT) and 402-411 (QSWAATAGSG). Asp412 is a binding site for (6S)-NADPHX.

The protein in the N-terminal section; belongs to the NnrE/AIBP family. In the C-terminal section; belongs to the NnrD/CARKD family. The cofactor is K(+).

The enzyme catalyses (6S)-NADHX + ADP = AMP + phosphate + NADH + H(+). The catalysed reaction is (6S)-NADPHX + ADP = AMP + phosphate + NADPH + H(+). It catalyses the reaction (6R)-NADHX = (6S)-NADHX. It carries out the reaction (6R)-NADPHX = (6S)-NADPHX. In terms of biological role, bifunctional enzyme that catalyzes the epimerization of the S- and R-forms of NAD(P)HX and the dehydration of the S-form of NAD(P)HX at the expense of ADP, which is converted to AMP. This allows the repair of both epimers of NAD(P)HX, a damaged form of NAD(P)H that is a result of enzymatic or heat-dependent hydration. In Mycobacterium leprae (strain TN), this protein is Bifunctional NAD(P)H-hydrate repair enzyme Nnr (nnr).